The following is a 299-amino-acid chain: Probable lipid kinase YegS (299 aa).

In terms of domain architecture, DAGKc spans A2 to T133. Residues T40, G66–E72, and T95 contribute to the ATP site. Mg(2+)-binding residues include L215, D218, and L220. The active-site Proton acceptor is E271.

The protein belongs to the diacylglycerol/lipid kinase family. YegS lipid kinase subfamily. It depends on Mg(2+) as a cofactor. The cofactor is Ca(2+).

It localises to the cytoplasm. In terms of biological role, probably phosphorylates lipids; the in vivo substrate is unknown. The polypeptide is Probable lipid kinase YegS (Salmonella choleraesuis (strain SC-B67)).